Here is an 880-residue protein sequence, read N- to C-terminus: Beta-N-acetylglucosaminidase (880 aa).

An N-terminal signal peptide occupies residues 1–27 (MKKRLIAPMLLSAASLAFFAMSGSAQA). SPOR domains are found at residues 70 to 149 (SGTT…VKAY), 150 to 229 (GAAQ…LKET), and 230 to 311 (VKGQ…YQQV). 2 consecutive repeat copies span residues 439 to 473 (ITTE…GQTA) and 479 to 513 (ITTE…GQTA). One can recognise an SH3b domain in the interval 630-700 (TATSTVTADV…VDPNNFSRDS (71 aa)).

Belongs to the glycosyl hydrolase 73 family. As to quaternary structure, homodimer.

It localises to the secreted. The protein resides in the cell wall. It catalyses the reaction an N(4)-(oligosaccharide-(1-&gt;3)-[oligosaccharide-(1-&gt;6)]-beta-D-Man-(1-&gt;4)-beta-D-GlcNAc-(1-&gt;4)-alpha-D-GlcNAc)-L-asparaginyl-[protein] + H2O = an oligosaccharide-(1-&gt;3)-[oligosaccharide-(1-&gt;6)]-beta-D-Man-(1-&gt;4)-D-GlcNAc + N(4)-(N-acetyl-beta-D-glucosaminyl)-L-asparaginyl-[protein]. Inhibited by diethyl pyrocarbonate, slightly by EDTA. Not inhibited by PMSF, diisopropyl fluorophosphate, 2-mercaptoethanol or N-ethylmaleimide. In terms of biological role, cell wall hydrolase not involved in cell autolysis, competence, sporulation or germination. It hydrolyzes the beta-1,4 glycan bond between the N-acetylglucosaminyl and the N-acetylmuramoyl residues in the glycan chain. This is Beta-N-acetylglucosaminidase (lytD) from Bacillus subtilis (strain 168).